Reading from the N-terminus, the 177-residue chain is Large ribosomal subunit protein uL6 (177 aa).

This sequence belongs to the universal ribosomal protein uL6 family. As to quaternary structure, part of the 50S ribosomal subunit.

In terms of biological role, this protein binds to the 23S rRNA, and is important in its secondary structure. It is located near the subunit interface in the base of the L7/L12 stalk, and near the tRNA binding site of the peptidyltransferase center. The protein is Large ribosomal subunit protein uL6 of Bradyrhizobium diazoefficiens (strain JCM 10833 / BCRC 13528 / IAM 13628 / NBRC 14792 / USDA 110).